A 339-amino-acid chain; its full sequence is DNA-directed RNA polymerase subunit alpha (339 aa).

Positions 1–235 (MVLQKNWQSL…DQLQLFINFD (235 aa)) are alpha N-terminal domain (alpha-NTD). Residues 251-339 (FNRNLLRKVD…DLAKRLDETF (89 aa)) form an alpha C-terminal domain (alpha-CTD) region.

This sequence belongs to the RNA polymerase alpha chain family. As to quaternary structure, homodimer. The RNAP catalytic core consists of 2 alpha, 1 beta, 1 beta' and 1 omega subunit. When a sigma factor is associated with the core the holoenzyme is formed, which can initiate transcription.

It catalyses the reaction RNA(n) + a ribonucleoside 5'-triphosphate = RNA(n+1) + diphosphate. Its function is as follows. DNA-dependent RNA polymerase catalyzes the transcription of DNA into RNA using the four ribonucleoside triphosphates as substrates. The chain is DNA-directed RNA polymerase subunit alpha from Gluconobacter oxydans (strain 621H) (Gluconobacter suboxydans).